We begin with the raw amino-acid sequence, 215 residues long: MRTGIIAQKIGMTSVFNDKGERISLTLVKVDDCQVVGHKTLEKHGYNALVIGVKDKKISRVTKPMRQVFANAKISPKTKLKEFRISEENFIDIAASLEVDHFTAGQFVDITATTIGKGFAGSMKRHNFRGLEASHGVSISHRSHGSTGQRQDPGKVFKGKKMAGHMGCNKVTIQNLKIFAVDKERKLIMIQGSIPGHKNSYLSVKDAIKKISITV.

The interval 136–155 (GVSISHRSHGSTGQRQDPGK) is disordered. Gln151 carries the post-translational modification N5-methylglutamine.

Belongs to the universal ribosomal protein uL3 family. As to quaternary structure, part of the 50S ribosomal subunit. Forms a cluster with proteins L14 and L19. Post-translationally, methylated by PrmB.

Functionally, one of the primary rRNA binding proteins, it binds directly near the 3'-end of the 23S rRNA, where it nucleates assembly of the 50S subunit. The sequence is that of Large ribosomal subunit protein uL3 from Rickettsia conorii (strain ATCC VR-613 / Malish 7).